The chain runs to 20 residues: Chrysophsin-3 (20 aa).

Histidine 20 carries the post-translational modification Histidine amide.

Gill.

The protein localises to the secreted. Functionally, has antibacterial activity against Gram-positive bacteria B.subtilis ATCC 6633, L.garvieae ATCC 49156 and S.iniae F-8502, and Gram-negative bacteria E.coli WT-2, V.anguillarum ATCC 19264, V.penaeicida KHA, V.harveyi ATCC 14126, V.vulnificus ATCC 33148, A.salmonicida NCMB 1102 and P.putida ATCC 12633. Has hemolytic activity against human red blood cells. Seems to disrupt the membranes by adopting an alpha helical conformation. May play a significant role in innate host defense. The polypeptide is Chrysophsin-3 (Pagrus major (Red sea bream)).